Here is a 188-residue protein sequence, read N- to C-terminus: Respiratory supercomplex factor 1, mitochondrial (188 aa).

Residues aspartate 3 to glutamate 94 enclose the HIG1 domain. 2 consecutive transmembrane segments (helical) span residues proline 30–alanine 46 and isoleucine 66–tyrosine 83. A coiled-coil region spans residues tyrosine 83 to glutamate 119. The tract at residues lysine 147–arginine 171 is disordered.

It belongs to the RCF1 family. In terms of assembly, associates with the respiratory chain complex III/complex IV supercomplex.

The protein localises to the mitochondrion membrane. Functionally, cytochrome c oxidase subunit which plays a role in assembly of respiratory supercomplexes. This chain is Respiratory supercomplex factor 1, mitochondrial (rcf1), found in Talaromyces stipitatus (strain ATCC 10500 / CBS 375.48 / QM 6759 / NRRL 1006) (Penicillium stipitatum).